The sequence spans 515 residues: DNA-directed RNA polymerase subunit Rpo2N (515 aa).

The protein belongs to the RNA polymerase beta chain family. In terms of assembly, part of the RNA polymerase complex.

It is found in the cytoplasm. It catalyses the reaction RNA(n) + a ribonucleoside 5'-triphosphate = RNA(n+1) + diphosphate. Its function is as follows. DNA-dependent RNA polymerase (RNAP) catalyzes the transcription of DNA into RNA using the four ribonucleoside triphosphates as substrates. The Rpo2 subunit (Rpo2N and Rpo2C in this organism) is implicated in DNA promoter recognition and in nucleotide binding. The polypeptide is DNA-directed RNA polymerase subunit Rpo2N (Methanothermobacter thermautotrophicus (strain Winter) (Methanobacterium thermoautotrophicum)).